We begin with the raw amino-acid sequence, 504 residues long: Maturase K (504 aa).

Belongs to the intron maturase 2 family. MatK subfamily.

It localises to the plastid. The protein localises to the chloroplast. Functionally, usually encoded in the trnK tRNA gene intron. Probably assists in splicing its own and other chloroplast group II introns. In Matthiola incana (Common stock), this protein is Maturase K.